The sequence spans 709 residues: Putative extracellular sulfatase Sulf-1 homolog (709 aa).

Residues 1–27 form the signal peptide; it reads MISNLRISNYFIIFYVLFLIIPIKVTS. Ca(2+) contacts are provided by aspartate 43, aspartate 44, and cysteine 79. The Nucleophile role is filled by cysteine 79. Cysteine 79 bears the 3-oxoalanine (Cys) mark. Residues asparagine 103, asparagine 162, and asparagine 189 are each glycosylated (N-linked (GlcNAc...) asparagine). Positions 308 and 309 each coordinate Ca(2+). Asparagine 344, asparagine 468, asparagine 500, asparagine 540, asparagine 566, asparagine 610, and asparagine 620 each carry an N-linked (GlcNAc...) asparagine glycan.

This sequence belongs to the sulfatase family. Ca(2+) serves as cofactor. In terms of processing, the conversion to 3-oxoalanine (also known as C-formylglycine, FGly), of a serine or cysteine residue in prokaryotes and of a cysteine residue in eukaryotes, is critical for catalytic activity.

The protein resides in the endoplasmic reticulum. It is found in the golgi apparatus. It localises to the golgi stack. Its subcellular location is the cell surface. The protein is Putative extracellular sulfatase Sulf-1 homolog (sul-1) of Caenorhabditis elegans.